The following is an 827-amino-acid chain: Striatin homolog (827 aa).

The stretch at 37 to 109 forms a coiled coil; it reads RAHWISEKAE…VEEEEEEDDK (73 aa). 4 disordered regions span residues 99-123, 181-270, 311-362, and 400-459; these read KVEE…SKDN, KDIN…QLQS, SSVS…DEQS, and EEGN…SELM. Basic and acidic residues predominate over residues 109–123; it reads KIPKNREPPKKSKDN. Low complexity-rich tracts occupy residues 184 to 270 and 311 to 334; these read NNNN…QLQS and SSVS…TSKQ. Positions 337-346 are enriched in polar residues; it reads EDPNNVTISK. Composition is skewed to low complexity over residues 347–356, 416–432, and 439–453; these read QQQQEQQQQQ, TPTT…STGS, and SSSS…NSNT. 6 WD repeats span residues 495-534, 548-593, 610-649, 709-748, 751-790, and 797-827; these read SHFD…PTKK, GHTG…IDSY, GHQD…QLYT, NNNS…VVHS, AHSN…CIQD, and KYDE…RILN.

This sequence belongs to the WD repeat striatin family. In terms of assembly, part of the core of STRIPAK complexes.

It localises to the cytoplasm. It is found in the membrane. Calmodulin-binding scaffolding protein which is the center of the striatin-interacting phosphatase and kinase (STRIPAK) complexes. STRIPAK complexes have critical roles in protein (de)phosphorylation and are regulators of multiple signaling pathways including Hippo, MAPK, nuclear receptor and cytoskeleton remodeling. Different types of STRIPAK complexes are involved in a variety of biological processes such as cell growth, differentiation, apoptosis, metabolism and immune regulation. This is Striatin homolog (strn) from Dictyostelium discoideum (Social amoeba).